Consider the following 358-residue polypeptide: Protein-L-isoaspartate O-methyltransferase domain-containing protein 1 (358 aa).

Glycine 2 carries N-myristoyl glycine lipidation. Residue serine 64 is part of the active site. AdoMet binding motif regions lie at residues 85–94 (LNLGSGTGYL), 160–164 (YDRIY), and 181–191 (LKVGGILVMPI). The BC-box stretch occupies residues 240–250 (VRNLQDLARIY). A disordered region spans residues 300–339 (PLDSEEDERMEDDNKEEEDKDHSEALKPEEPPRNLLREKI). Residues 302–318 (DSEEDERMEDDNKEEED) are compositionally biased toward acidic residues. Residues 319–339 (KDHSEALKPEEPPRNLLREKI) are compositionally biased toward basic and acidic residues. Residues 342-345 (LPLP) are CUL-box.

This sequence belongs to the methyltransferase superfamily. L-isoaspartyl/D-aspartyl protein methyltransferase family. As to quaternary structure, component of the probable ECS(PCMTD1) E3 ubiquitin-protein ligase complex, at least composed of CUL5, ELOB, ELOC, RBX2 and PCMTD1.

Its subcellular location is the cytoplasm. It is found in the membrane. Its function is as follows. Substrate recognition component of an ECS (Elongin BC-CUL5-SOCS-box protein) E3 ubiquitin ligase complex which mediates the ubiquitination and subsequent proteasomal degradation of target proteins. Specifically binds to the methyltransferase cofactor S-adenosylmethionine (AdoMet) via the N-terminal AdoMet binding motif, but does not display methyltransferase activity. May provide an alternate maintenance pathway for modified proteins by acting as a damage-specific E3 ubiquitin ligase adaptor protein. The sequence is that of Protein-L-isoaspartate O-methyltransferase domain-containing protein 1 (PCMTD1) from Gallus gallus (Chicken).